A 162-amino-acid polypeptide reads, in one-letter code: Endoribonuclease YbeY (162 aa).

3 residues coordinate Zn(2+): His130, His134, and His140.

Belongs to the endoribonuclease YbeY family. Zn(2+) serves as cofactor.

Its subcellular location is the cytoplasm. In terms of biological role, single strand-specific metallo-endoribonuclease involved in late-stage 70S ribosome quality control and in maturation of the 3' terminus of the 16S rRNA. The protein is Endoribonuclease YbeY of Nitratidesulfovibrio vulgaris (strain ATCC 29579 / DSM 644 / CCUG 34227 / NCIMB 8303 / VKM B-1760 / Hildenborough) (Desulfovibrio vulgaris).